The following is a 204-amino-acid chain: Apoptosis regulator R11 (204 aa).

Residues 101-120 carry the BH1 motif; that stretch reads ELFRDGTNWGRIVAFFSFGR. A BH2 motif is present at residues 152-167; the sequence is PWMQENGGWEAFVGLY. The helical transmembrane segment at 181 to 198 threads the bilayer; it reads RFGRLLTIVMLTGVFALV.

It belongs to the Bcl-2 family.

It is found in the membrane. Its function is as follows. Confers strong protection against cell death. In Xenopus laevis (African clawed frog), this protein is Apoptosis regulator R11.